A 269-amino-acid polypeptide reads, in one-letter code: Hydroxyethylthiazole kinase (269 aa).

Substrate is bound at residue methionine 48. ATP-binding residues include lysine 124 and threonine 170. Glycine 197 provides a ligand contact to substrate.

This sequence belongs to the Thz kinase family. It depends on Mg(2+) as a cofactor.

It carries out the reaction 5-(2-hydroxyethyl)-4-methylthiazole + ATP = 4-methyl-5-(2-phosphooxyethyl)-thiazole + ADP + H(+). The protein operates within cofactor biosynthesis; thiamine diphosphate biosynthesis; 4-methyl-5-(2-phosphoethyl)-thiazole from 5-(2-hydroxyethyl)-4-methylthiazole: step 1/1. Catalyzes the phosphorylation of the hydroxyl group of 4-methyl-5-beta-hydroxyethylthiazole (THZ). The protein is Hydroxyethylthiazole kinase of Clostridium kluyveri (strain NBRC 12016).